We begin with the raw amino-acid sequence, 117 residues long: Transcription elongation factor SPT4 (117 aa).

Alanine 2 is subject to N-acetylalanine. Residues 2–40 form an interaction with SUPT5H region; the sequence is ALETVPKDLRHLRACLLCSLVKTIDQFEYDGCDNCDAYL. Zn(2+) contacts are provided by cysteine 16, cysteine 19, cysteine 33, and cysteine 36. The C4-type zinc-finger motif lies at 16 to 36; the sequence is CLLCSLVKTIDQFEYDGCDNC.

It belongs to the SPT4 family. As to quaternary structure, interacts with SUPT5H to form DSIF. DSIF interacts with the positive transcription elongation factor b complex (P-TEFb complex), which is composed of CDK9 and cyclin-T (CCNT1 or CCNT2). DSIF interacts with RNA polymerase II, and this interaction is reduced by phosphorylation of the C-terminal domain (CTD) of POLR2A by P-TEFb. DSIF also interacts with the NELF complex, which is composed of NELFA, NELFB, NELFD and NELFE, and this interaction occurs following prior binding of DSIF to RNA polymerase II. DSIF also interacts with PRMT1/HRMT1L2, TATSF1, RNGTT/CAP1A, PRMT5/SKB1, SUPT6H, and can interact with PIN1. Ubiquitinated by UBR5 when not assembled in the DSIF complex, leading to its degradation: UBR5 recognizes and binds a degron that is not accessible when SUPT4H1 is part of the DSIF complex.

The protein localises to the nucleus. Its function is as follows. Component of the DRB sensitivity-inducing factor complex (DSIF complex), which regulates mRNA processing and transcription elongation by RNA polymerase II. DSIF positively regulates mRNA capping by stimulating the mRNA guanylyltransferase activity of RNGTT/CAP1A. DSIF also acts cooperatively with the negative elongation factor complex (NELF complex) to enhance transcriptional pausing at sites proximal to the promoter. Transcriptional pausing may facilitate the assembly of an elongation competent RNA polymerase II complex. DSIF and NELF promote pausing by inhibition of the transcription elongation factor TFIIS/S-II. TFIIS/S-II binds to RNA polymerase II at transcription pause sites and stimulates the weak intrinsic nuclease activity of the enzyme. Cleavage of blocked transcripts by RNA polymerase II promotes the resumption of transcription from the new 3' terminus and may allow repeated attempts at transcription through natural pause sites. The protein is Transcription elongation factor SPT4 (SUPT4H1) of Pongo abelii (Sumatran orangutan).